A 220-amino-acid chain; its full sequence is Elongation factor Ts (220 aa).

Residues 83-86 form an involved in Mg(2+) ion dislocation from EF-Tu region; the sequence is TDFV.

It belongs to the EF-Ts family.

Its subcellular location is the cytoplasm. In terms of biological role, associates with the EF-Tu.GDP complex and induces the exchange of GDP to GTP. It remains bound to the aminoacyl-tRNA.EF-Tu.GTP complex up to the GTP hydrolysis stage on the ribosome. The chain is Elongation factor Ts from Synechococcus sp. (strain CC9605).